The following is a 481-amino-acid chain: Alpha-ketoglutaric semialdehyde dehydrogenase 1 (481 aa).

NADP(+)-binding positions include 154-155, 178-181, and 231-232; these read WN, KAPE, and GS. The active-site Proton acceptor is the Glu-253. Position 254 (Leu-254) interacts with NADP(+). Residue Cys-287 is the Nucleophile of the active site. Glu-384 serves as a coordination point for NADP(+).

The protein belongs to the aldehyde dehydrogenase family. As to quaternary structure, homotetramer.

The enzyme catalyses 2,5-dioxopentanoate + NADP(+) + H2O = 2-oxoglutarate + NADPH + 2 H(+). It carries out the reaction 2,5-dioxopentanoate + NAD(+) + H2O = 2-oxoglutarate + NADH + 2 H(+). It catalyses the reaction succinate semialdehyde + NAD(+) + H2O = succinate + NADH + 2 H(+). In terms of biological role, catalyzes the NAD(P)(+)-dependent oxidation of alpha-ketoglutaric semialdehyde (alphaKGSA) to alpha-ketoglutarate. Is involved in a degradation pathway of L-arabinose that allows A.brasilense to grow on L-arabinose as a sole carbon source. Prefers NAD(+) to NADP(+) as a cosubstrate. Displays broad substrate specificity: exhibits the highest activity with alphaKGSA and succinic semialdehyde as substrates, but to a lesser extent, is also active with glutaraldehyde, benzaldehyde, and a number of aldehydes from C3 to C8. In Azospirillum brasilense, this protein is Alpha-ketoglutaric semialdehyde dehydrogenase 1 (araE).